A 310-amino-acid polypeptide reads, in one-letter code: Tagatose-6-phosphate kinase (310 aa).

Belongs to the carbohydrate kinase PfkB family. LacC subfamily.

The catalysed reaction is D-tagatofuranose 6-phosphate + ATP = D-tagatofuranose 1,6-bisphosphate + ADP + H(+). Its pathway is carbohydrate metabolism; D-tagatose 6-phosphate degradation; D-glyceraldehyde 3-phosphate and glycerone phosphate from D-tagatose 6-phosphate: step 1/2. The polypeptide is Tagatose-6-phosphate kinase (Staphylococcus epidermidis (strain ATCC 12228 / FDA PCI 1200)).